The primary structure comprises 226 residues: PKHD-type hydroxylase PST_0995 (226 aa).

Positions 78–178 (KVFPPLFNCY…RLASFFWIQS (101 aa)) constitute a Fe2OG dioxygenase domain. Residues His-96, Asp-98, and His-159 each contribute to the Fe cation site. 2-oxoglutarate is bound at residue Arg-169.

Fe(2+) is required as a cofactor. Requires L-ascorbate as cofactor.

The polypeptide is PKHD-type hydroxylase PST_0995 (Stutzerimonas stutzeri (strain A1501) (Pseudomonas stutzeri)).